A 105-amino-acid polypeptide reads, in one-letter code: Putative neurotoxin 10 (105 aa).

A signal peptide spans 1–21; sequence MTVSCSKVLLSLCLFLILLEA.

It belongs to the scolopendra neurotoxin 10 family. In terms of processing, contains 3 disulfide bonds. In terms of tissue distribution, expressed by the venom gland.

The protein resides in the secreted. This Scolopendra mutilans (Chinese red-headed centipede) protein is Putative neurotoxin 10.